Here is a 306-residue protein sequence, read N- to C-terminus: Probable GTP 3',8-cyclase (306 aa).

In terms of domain architecture, Radical SAM core spans 5 to 232 (RFGRPVTNLR…RRRKYFLPVD (228 aa)). Arginine 14 is a GTP binding site. The [4Fe-4S] cluster site is built by cysteine 21 and cysteine 25. Residue tyrosine 27 participates in S-adenosyl-L-methionine binding. Cysteine 28 is a [4Fe-4S] cluster binding site. Lysine 61 is a GTP binding site. Glycine 65 provides a ligand contact to S-adenosyl-L-methionine. Residue threonine 90 participates in GTP binding. S-adenosyl-L-methionine is bound at residue serine 114. Residue lysine 150 coordinates GTP. Methionine 189 is a binding site for S-adenosyl-L-methionine. 2 residues coordinate [4Fe-4S] cluster: cysteine 250 and cysteine 253. 255–257 (RLR) lines the GTP pocket. Residue cysteine 267 coordinates [4Fe-4S] cluster.

The protein belongs to the radical SAM superfamily. MoaA family. [4Fe-4S] cluster is required as a cofactor.

It catalyses the reaction GTP + AH2 + S-adenosyl-L-methionine = (8S)-3',8-cyclo-7,8-dihydroguanosine 5'-triphosphate + 5'-deoxyadenosine + L-methionine + A + H(+). It functions in the pathway cofactor biosynthesis; molybdopterin biosynthesis. Its function is as follows. Catalyzes the cyclization of GTP to (8S)-3',8-cyclo-7,8-dihydroguanosine 5'-triphosphate. The chain is Probable GTP 3',8-cyclase from Pyrococcus abyssi (strain GE5 / Orsay).